The chain runs to 580 residues: Isocitrate lyase (580 aa).

106 to 108 (SGW) is a substrate binding site. Position 177 (D177) interacts with Mg(2+). C215 (proton acceptor) is an active-site residue. Substrate is bound by residues 216 to 217 (GH), R252, 441 to 445 (NLSPS), and T476. The Microbody targeting signal signature appears at 578–580 (SRM).

Belongs to the isocitrate lyase/PEP mutase superfamily. Isocitrate lyase family. In terms of assembly, homotetramer. Requires Mg(2+) as cofactor.

Its subcellular location is the glyoxysome. It carries out the reaction D-threo-isocitrate = glyoxylate + succinate. It functions in the pathway carbohydrate metabolism; glyoxylate cycle; (S)-malate from isocitrate: step 1/2. Functionally, involved in storage lipid mobilization during the growth of higher plant seedling. In Pinus taeda (Loblolly pine), this protein is Isocitrate lyase (ICL 8).